The chain runs to 380 residues: Cytochrome b (380 aa).

The next 4 helical transmembrane spans lie at 34–54 (FGSL…LLAM), 78–99 (WLIR…YLHI), 114–134 (WNTG…GYVL), and 179–199 (FFAL…IHLT). 2 residues coordinate heme b: H84 and H98. Heme b contacts are provided by H183 and H197. Residue H202 participates in a ubiquinone binding. 4 helical membrane passes run 227–247 (TKDT…ALFS), 289–309 (LGGV…PLLH), 321–341 (LSQL…WIGS), and 348–368 (FIII…ILFP).

The protein belongs to the cytochrome b family. The cytochrome bc1 complex contains 11 subunits: 3 respiratory subunits (MT-CYB, CYC1 and UQCRFS1), 2 core proteins (UQCRC1 and UQCRC2) and 6 low-molecular weight proteins (UQCRH/QCR6, UQCRB/QCR7, UQCRQ/QCR8, UQCR10/QCR9, UQCR11/QCR10 and a cleavage product of UQCRFS1). This cytochrome bc1 complex then forms a dimer. It depends on heme b as a cofactor.

It is found in the mitochondrion inner membrane. Functionally, component of the ubiquinol-cytochrome c reductase complex (complex III or cytochrome b-c1 complex) that is part of the mitochondrial respiratory chain. The b-c1 complex mediates electron transfer from ubiquinol to cytochrome c. Contributes to the generation of a proton gradient across the mitochondrial membrane that is then used for ATP synthesis. The sequence is that of Cytochrome b (MT-CYB) from Aptenodytes patagonicus (King penguin).